A 135-amino-acid polypeptide reads, in one-letter code: NADH-quinone oxidoreductase subunit K (135 aa).

Helical transmembrane passes span 33 to 53 (VLGLIPMSHGLILAGILFAIG), 63 to 83 (FLFMLMSLEIMMNAAALAFVV), and 95 to 115 (IMFIFILTLAAAEAAIGLAIL).

The protein belongs to the complex I subunit 4L family. NDH-1 is composed of 14 different subunits. Subunits NuoA, H, J, K, L, M, N constitute the membrane sector of the complex.

The protein resides in the cell inner membrane. It catalyses the reaction a quinone + NADH + 5 H(+)(in) = a quinol + NAD(+) + 4 H(+)(out). Functionally, NDH-1 shuttles electrons from NADH, via FMN and iron-sulfur (Fe-S) centers, to quinones in the respiratory chain. The immediate electron acceptor for the enzyme in this species is believed to be ubiquinone. Couples the redox reaction to proton translocation (for every two electrons transferred, four hydrogen ions are translocated across the cytoplasmic membrane), and thus conserves the redox energy in a proton gradient. This Psychrobacter cryohalolentis (strain ATCC BAA-1226 / DSM 17306 / VKM B-2378 / K5) protein is NADH-quinone oxidoreductase subunit K.